Consider the following 364-residue polypeptide: Pre-small/secreted glycoprotein (364 aa).

A signal peptide spans 1–32 (MGVTGILQLPRDRFKRTSFFLWVIILFQRTFS). An N-linked (GlcNAc...) asparagine; by host glycan is attached at asparagine 40. 2 cysteine pairs are disulfide-bonded: cysteine 108-cysteine 135 and cysteine 121-cysteine 147. Asparagine 204, asparagine 228, asparagine 238, asparagine 257, and asparagine 268 each carry an N-linked (GlcNAc...) asparagine; by host glycan.

This sequence belongs to the filoviruses glycoprotein family. As to quaternary structure, homodimer; disulfide-linked. The homodimers are linked by two disulfide bonds in a parallel orientation. Monomer. Post-translationally, this precursor is processed into mature sGP and delta-peptide by host furin or furin-like proteases. The cleavage site corresponds to the furin optimal cleavage sequence [KR]-X-[KR]-R. N-glycosylated. In terms of processing, O-glycosylated.

The protein resides in the secreted. Functionally, seems to possess an anti-inflammatory activity as it can reverse the barrier-decreasing effects of TNF alpha. Might therefore contribute to the lack of inflammatory reaction seen during infection in spite the of extensive necrosis and massive virus production. Does not seem to be involved in activation of primary macrophages. Does not seem to interact specifically with neutrophils. Its function is as follows. Viroporin that permeabilizes mammalian cell plasma membranes. It acts by altering permeation of ionic compounds and small molecules. This activity may lead to viral enterotoxic activity. This Zaire ebolavirus (strain Eckron-76) (ZEBOV) protein is Pre-small/secreted glycoprotein (GP).